Reading from the N-terminus, the 767-residue chain is ATPase family gene 2 protein homolog B (767 aa).

An N-acetylmethionine modification is found at M1. ATP contacts are provided by residues 241 to 248 (GPPGVGKT) and 507 to 514 (GPPGCAKT).

Belongs to the AAA ATPase family. AFG2 subfamily. Part of the 55LCC heterohexameric ATPase complex composed at least of AIRIM, AFG2A, AFG2B and CINP. Associates with pre-60S ribosomal particles.

The protein localises to the cytoplasm. It is found in the cytoskeleton. Its subcellular location is the spindle. The protein resides in the nucleus. It catalyses the reaction ATP + H2O = ADP + phosphate + H(+). With respect to regulation, in the context of 55LCC heterohexameric ATPase complex, the ATPase activity is stimulated by DNA binding and inhibited in presence of RNA. In terms of biological role, ATP-dependent chaperone part of the 55LCC heterohexameric ATPase complex which is chromatin-associated and promotes replisome proteostasis to maintain replication fork progression and genome stability. Required for replication fork progression, sister chromatid cohesion, and chromosome stability. The ATPase activity is specifically enhanced by replication fork DNA and is coupled to cysteine protease-dependent cleavage of replisome substrates in response to replication fork damage. Uses ATPase activity to process replisome substrates in S-phase, facilitating their proteolytic turnover from chromatin to ensure DNA replication and mitotic fidelity. Plays an essential role in the cytoplasmic maturation steps of pre-60S ribosomal particles by promoting the release of shuttling protein RSL24D1/RLP24 from the pre-ribosomal particles. This Bos taurus (Bovine) protein is ATPase family gene 2 protein homolog B (AFG2B).